Here is a 196-residue protein sequence, read N- to C-terminus: ATP-dependent Clp protease proteolytic subunit (196 aa).

Residue S98 is the Nucleophile of the active site. H123 is a catalytic residue.

This sequence belongs to the peptidase S14 family. In terms of assembly, fourteen ClpP subunits assemble into 2 heptameric rings which stack back to back to give a disk-like structure with a central cavity, resembling the structure of eukaryotic proteasomes.

Its subcellular location is the cytoplasm. The catalysed reaction is Hydrolysis of proteins to small peptides in the presence of ATP and magnesium. alpha-casein is the usual test substrate. In the absence of ATP, only oligopeptides shorter than five residues are hydrolyzed (such as succinyl-Leu-Tyr-|-NHMec, and Leu-Tyr-Leu-|-Tyr-Trp, in which cleavage of the -Tyr-|-Leu- and -Tyr-|-Trp bonds also occurs).. In terms of biological role, cleaves peptides in various proteins in a process that requires ATP hydrolysis. Has a chymotrypsin-like activity. Plays a major role in the degradation of misfolded proteins. The protein is ATP-dependent Clp protease proteolytic subunit of Geobacillus thermodenitrificans (strain NG80-2).